Reading from the N-terminus, the 20-residue chain is Implantin (20 aa).

Belongs to the EF-1-beta/EF-1-delta family. In terms of processing, phosphorylated. As to expression, uterus and embryo.

Its subcellular location is the cytoplasm. It localises to the nucleus. Binds DNA. The sequence is that of Implantin from Mus musculus (Mouse).